A 101-amino-acid polypeptide reads, in one-letter code: Phosphoprotein OPG062 (101 aa).

The tract at residues 51-73 (PSSPACERRPSSPSRCERMNNPR) is disordered. Phosphoserine occurs at positions 53 and 62. Residues 56–70 (CERRPSSPSRCERMN) show a composition bias toward basic and acidic residues.

Belongs to the orthopoxvirus OPG062 family. In terms of assembly, self-associates to form high molecular-weight forms. Interacts with protein OPG157/A30. Interacts with host RICTOR and RPTOR; these interactions disrupt the mTORC1 and mTORC2 crosstalk. In terms of processing, phosphorylated on two serines. While these phosphorylations do not play a role in virion assembly; they are essential for the interaction with host RICTOR and RPTOR.

The protein resides in the virion. Plays an essential role in virion assembly and morphogenesis. Also plays a role in the inhibition of host immune response by dysregulating mTOR. Sequesters host RICTOR and RPTOR, thereby disrupting mTORC1 and mTORC2 crosstalk. In turn, blocks the host antiviral response in part through mTOR-dependent degradation of cGAS, the primary poxvirus sensor. This is Phosphoprotein OPG062 (OPG062) from Vaccinia virus (strain Western Reserve) (VACV).